A 757-amino-acid chain; its full sequence is Protein hunchback (757 aa).

Disordered stretches follow at residues glutamate 30 to serine 51 and glutamate 171 to lysine 213. Residues serine 39–serine 51 are compositionally biased toward polar residues. The segment covering glutamate 197–lysine 213 has biased composition (basic and acidic residues). 4 consecutive C2H2-type zinc fingers follow at residues tyrosine 239–histidine 261, leucine 268–histidine 290, phenylalanine 296–histidine 318, and tyrosine 324–histidine 348. Disordered stretches follow at residues aspartate 367–serine 416, glutamate 511–lysine 535, and methionine 602–serine 694. 2 stretches are compositionally biased toward low complexity: residues valine 397–alanine 414 and glutamine 512–serine 521. The span at aspartate 522 to glutamate 531 shows a compositional bias: acidic residues. Over residues alanine 651–serine 694 the composition is skewed to low complexity. C2H2-type zinc fingers lie at residues tyrosine 704–histidine 726 and phenylalanine 732–histidine 756.

The protein belongs to the hunchback C2H2-type zinc-finger protein family.

The protein localises to the nucleus. Gap class segmentation protein that controls development of head structures. This chain is Protein hunchback (hb), found in Drosophila sechellia (Fruit fly).